The chain runs to 202 residues: Oligoribonuclease (202 aa).

An Exonuclease domain is found at 2-166 (LVWIDCEMTG…ADIQESIEEL (165 aa)). The active site involves tyrosine 123.

This sequence belongs to the oligoribonuclease family.

It is found in the cytoplasm. 3'-to-5' exoribonuclease specific for small oligoribonucleotides. The protein is Oligoribonuclease of Cutibacterium acnes (strain DSM 16379 / KPA171202) (Propionibacterium acnes).